The primary structure comprises 717 residues: Delta-1-pyrroline-5-carboxylate synthase (717 aa).

The segment at 1-296 is glutamate 5-kinase; the sequence is METVDSTRAF…WASIGETDAR (296 aa). Substrate contacts are provided by Ser60, Asp157, and Asn176. ATP-binding positions include 196–197 and 236–242; these read SD and RGGMTAK. The segment at 297–717 is gamma-glutamyl phosphate reductase; the sequence is EMAVAARACS…YSHKDLTQQG (421 aa).

It in the N-terminal section; belongs to the glutamate 5-kinase family. In the C-terminal section; belongs to the gamma-glutamyl phosphate reductase family. In terms of tissue distribution, expressed at high levels in leaves and is inducible in roots subjected to salt stress.

It catalyses the reaction L-glutamate + ATP = L-glutamyl 5-phosphate + ADP. The catalysed reaction is L-glutamate 5-semialdehyde + phosphate + NADP(+) = L-glutamyl 5-phosphate + NADPH + H(+). The protein operates within amino-acid biosynthesis; L-proline biosynthesis; L-glutamate 5-semialdehyde from L-glutamate: step 1/2. It functions in the pathway amino-acid biosynthesis; L-proline biosynthesis; L-glutamate 5-semialdehyde from L-glutamate: step 2/2. Its activity is regulated as follows. Feedback regulated by proline. P5CS plays a key role in proline biosynthesis, leading to osmoregulation in plants. The protein is Delta-1-pyrroline-5-carboxylate synthase (PRO2) of Solanum lycopersicum (Tomato).